Reading from the N-terminus, the 364-residue chain is Ribosomal RNA large subunit methyltransferase M (364 aa).

S-adenosyl-L-methionine is bound by residues serine 198, alanine 231 to glycine 234, aspartate 250, aspartate 270, and aspartate 286. The Proton acceptor role is filled by lysine 315.

This sequence belongs to the class I-like SAM-binding methyltransferase superfamily. RNA methyltransferase RlmE family. RlmM subfamily. As to quaternary structure, monomer.

It is found in the cytoplasm. The catalysed reaction is cytidine(2498) in 23S rRNA + S-adenosyl-L-methionine = 2'-O-methylcytidine(2498) in 23S rRNA + S-adenosyl-L-homocysteine + H(+). Functionally, catalyzes the 2'-O-methylation at nucleotide C2498 in 23S rRNA. This Thauera aminoaromatica protein is Ribosomal RNA large subunit methyltransferase M.